A 273-amino-acid polypeptide reads, in one-letter code: MPELPEVETVRRSLEQELVGRYFVALRSLGWPKIVDTHSPELFAEAIAQRQIQQVQRRAKYLLIELDNHETLIVHLRMTGQMLVVAADEPADRHTHVVVALDNGRELRFHDPRKFGRWSLVDRSGVAALNQRLGPEPLGDDFTLDDFAQRLSRKATKIKPTLLDQSVLAGVGNIYADEALWLAKIHPLRSANSLNANEIAELFEAIKTVLRNSIEHRGTTLVNYRDAYGASGENQYHLEAYGRTGEPCRRCGTPIERIVVAQRSTHICPVCQA.

Pro-2 (schiff-base intermediate with DNA) is an active-site residue. Glu-3 (proton donor) is an active-site residue. Lys-60 functions as the Proton donor; for beta-elimination activity in the catalytic mechanism. His-94, Arg-113, and Lys-154 together coordinate DNA. The FPG-type zinc finger occupies 239–273; it reads EAYGRTGEPCRRCGTPIERIVVAQRSTHICPVCQA. The active-site Proton donor; for delta-elimination activity is the Arg-263.

The protein belongs to the FPG family. Monomer. The cofactor is Zn(2+).

It carries out the reaction Hydrolysis of DNA containing ring-opened 7-methylguanine residues, releasing 2,6-diamino-4-hydroxy-5-(N-methyl)formamidopyrimidine.. The enzyme catalyses 2'-deoxyribonucleotide-(2'-deoxyribose 5'-phosphate)-2'-deoxyribonucleotide-DNA = a 3'-end 2'-deoxyribonucleotide-(2,3-dehydro-2,3-deoxyribose 5'-phosphate)-DNA + a 5'-end 5'-phospho-2'-deoxyribonucleoside-DNA + H(+). Functionally, involved in base excision repair of DNA damaged by oxidation or by mutagenic agents. Acts as a DNA glycosylase that recognizes and removes damaged bases. Has a preference for oxidized purines, such as 7,8-dihydro-8-oxoguanine (8-oxoG). Has AP (apurinic/apyrimidinic) lyase activity and introduces nicks in the DNA strand. Cleaves the DNA backbone by beta-delta elimination to generate a single-strand break at the site of the removed base with both 3'- and 5'-phosphates. This is Formamidopyrimidine-DNA glycosylase from Herpetosiphon aurantiacus (strain ATCC 23779 / DSM 785 / 114-95).